The following is a 446-amino-acid chain: N-succinylarginine dihydrolase (446 aa).

Substrate is bound by residues 19 to 28 (AGLSFGNEAS), Asn-110, and 137 to 138 (HR). Glu-174 is an active-site residue. Arg-213 is a binding site for substrate. His-249 is an active-site residue. Positions 251 and 364 each coordinate substrate. Cys-370 functions as the Nucleophile in the catalytic mechanism.

The protein belongs to the succinylarginine dihydrolase family. In terms of assembly, homodimer.

It carries out the reaction N(2)-succinyl-L-arginine + 2 H2O + 2 H(+) = N(2)-succinyl-L-ornithine + 2 NH4(+) + CO2. It participates in amino-acid degradation; L-arginine degradation via AST pathway; L-glutamate and succinate from L-arginine: step 2/5. In terms of biological role, catalyzes the hydrolysis of N(2)-succinylarginine into N(2)-succinylornithine, ammonia and CO(2). The sequence is that of N-succinylarginine dihydrolase from Serratia proteamaculans (strain 568).